Consider the following 243-residue polypeptide: uncharacterized protein (243 aa).

The first 16 residues, 1–16 (MKHFIILFLLLFVTAG), serve as a signal peptide directing secretion. A lipid anchor (N-palmitoyl cysteine) is attached at C17. Residue C17 is the site of S-diacylglycerol cysteine attachment.

Its subcellular location is the cell membrane. This is an uncharacterized protein from Bacillus subtilis (strain 168).